Here is a 372-residue protein sequence, read N- to C-terminus: Probable leucine aminopeptidase MCYG_03459 (372 aa).

The first 18 residues, 1–18 (MKISTLAVVSAFAVTAIA), serve as a signal peptide directing secretion. N95 carries an N-linked (GlcNAc...) asparagine glycan. Zn(2+) contacts are provided by H175 and D194. Residues N195 and N219 are each glycosylated (N-linked (GlcNAc...) asparagine). Zn(2+) is bound by residues E233 and D260. A disulfide bridge links C305 with C309. A Zn(2+)-binding site is contributed by H338.

This sequence belongs to the peptidase M28 family. M28E subfamily. In terms of assembly, monomer. Requires Zn(2+) as cofactor.

The protein localises to the secreted. In terms of biological role, probable extracellular aminopeptidase which contributes to pathogenicity. This is Probable leucine aminopeptidase MCYG_03459 from Arthroderma otae (strain ATCC MYA-4605 / CBS 113480) (Microsporum canis).